The primary structure comprises 535 residues: CTP synthase (535 aa).

The amidoligase domain stretch occupies residues 1–268; it reads MSTKYIFVTG…DQIVCDHLKL (268 aa). Ser-14 is a CTP binding site. Ser-14 provides a ligand contact to UTP. 15 to 20 is a binding site for ATP; sequence SMGKGI. Tyr-55 is a binding site for L-glutamine. Asp-72 is an ATP binding site. Mg(2+) is bound by residues Asp-72 and Glu-142. CTP contacts are provided by residues 149–151, 189–194, and Lys-225; these read DME and KTKIAQ. UTP is bound by residues 189–194 and Lys-225; that span reads KTKIAQ. Val-243 serves as a coordination point for ATP. Positions 293–535 constitute a Glutamine amidotransferase type-1 domain; sequence KIALVGKYVE…FIRVAVENSK (243 aa). Gly-355 contributes to the L-glutamine binding site. Catalysis depends on Cys-382, which acts as the Nucleophile; for glutamine hydrolysis. L-glutamine is bound by residues 383–386, Glu-406, and Arg-464; that span reads LGMQ. Catalysis depends on residues His-509 and Glu-511.

This sequence belongs to the CTP synthase family. As to quaternary structure, homotetramer. In contrast to E.coli CTP synthase, remains a tetramer at dilute enzyme concentrations even in the absence of Mg(2+), ATP and UTP.

The catalysed reaction is UTP + L-glutamine + ATP + H2O = CTP + L-glutamate + ADP + phosphate + 2 H(+). It carries out the reaction L-glutamine + H2O = L-glutamate + NH4(+). The enzyme catalyses UTP + NH4(+) + ATP = CTP + ADP + phosphate + 2 H(+). The protein operates within pyrimidine metabolism; CTP biosynthesis via de novo pathway; CTP from UDP: step 2/2. Allosterically activated by GTP, when glutamine is the substrate. GTP has no effect on the reaction when ammonia is the substrate. The allosteric effector GTP functions by stabilizing the protein conformation that binds the tetrahedral intermediate(s) formed during glutamine hydrolysis. Also activated by magnesium. Allosterically inhibited by CTP. Its function is as follows. Catalyzes the ATP-dependent amination of UTP to CTP with either L-glutamine or ammonia as the source of nitrogen. Is essential for the synthesis of CTP de novo. Contrary to other bacterial CTP synthases, the lactococcal enzyme is also able to convert dUTP to dCTP, but this reaction may not play a significant physiological role. Regulates intracellular CTP levels through interactions with the four ribonucleotide triphosphates. This is CTP synthase from Lactococcus lactis subsp. cremoris (strain MG1363).